The primary structure comprises 70 residues: Beta-defensin 107A (70 aa).

A signal peptide spans 1 to 26; it reads MPGAMKIFFFIFAALILLAQIFQART. Cystine bridges form between C41–C55 and C45–C64.

It belongs to the beta-defensin family.

The protein localises to the secreted. In terms of biological role, has antibacterial activity. This is Beta-defensin 107A (DEFB107A) from Pan troglodytes (Chimpanzee).